The primary structure comprises 254 residues: Low affinity immunoglobulin gamma Fc region receptor III-A (254 aa).

Positions methionine 1 to alanine 16 are cleaved as a signal peptide. Residues glycine 17–glutamine 208 lie on the Extracellular side of the membrane. 2 consecutive Ig-like C2-type domains span residues proline 24–histidine 105 and glycine 107–threonine 189. The cysteines at positions 47 and 89 are disulfide-linked. N-linked (GlcNAc...) asparagine glycans are attached at residues asparagine 56, asparagine 63, and asparagine 92. Cysteine 128 and cysteine 172 are joined by a disulfide. Residues asparagine 180 and asparagine 187 are each glycosylated (N-linked (GlcNAc...) asparagine). The helical transmembrane segment at valine 209–valine 229 threads the bilayer. Residues lysine 230 to lysine 254 lie on the Cytoplasmic side of the membrane. Serine 236 carries the post-translational modification Phosphoserine; by PKC. Threonine 237 carries the phosphothreonine; by PKC modification.

Forms a heterooligomeric complex with ITAM-containing signaling subunits, either a homodimer of CD247, a homodimer of FCER1G or a heterodimer of CD247 and FCER1G. Interacts (via transmembrane domain) with signaling subunits; this interaction is a prerequisite for receptor complex expression on the cell surface and intracellular signal transduction. Binds the Fc region of antigen-complexed IgG with a preference for IgG1 and IgG3 isotypes. Interacts with CD2; this interaction is involved in NK cell activation and cytotoxicity. Interacts with S100A4; this interaction inhibits PKC-dependent phosphorylation of FCGR3A. Glycosylated. Contains high mannose- and complex-type oligosaccharides. Glycosylation at Asn-180 is mandatory for high affinity binding to the Fc and for discrimination between fucosylated and afucosylated IgG glycoforms. In terms of processing, undergoes rapid ectodomain shedding upon NK cell stimulation. The soluble form is produced by a proteolytic cleavage mediated by ADAM17. Repeated stimulation causes receptor shedding, a mechanism that allows for increased NK cell motility and detachment from opsonized target cells while avoiding activation-induced NK cell apoptosis. Post-translationally, phosphorylated at RSSTR motif by PKC. The relevant physiological PKCs might be PRKCI, PRKCG, PRKCE, PRKCH and PRKCQ. As to expression, expressed in natural killer cells (at protein level). Expressed in a subset of circulating monocytes (at protein level).

The protein localises to the cell membrane. The protein resides in the secreted. In terms of biological role, receptor for the invariable Fc fragment of immunoglobulin gamma (IgG). Optimally activated upon binding of clustered antigen-IgG complexes displayed on cell surfaces, triggers lysis of antibody-coated cells, a process known as antibody-dependent cellular cytotoxicity (ADCC). Does not bind free monomeric IgG, thus avoiding inappropriate effector cell activation in the absence of antigenic trigger. Mediates IgG effector functions on natural killer (NK) cells. Binds antigen-IgG complexes generated upon infection and triggers NK cell-dependent cytokine production and degranulation to limit viral load and propagation. Involved in the generation of memory-like adaptive NK cells capable to produce high amounts of IFNG and to efficiently eliminate virus-infected cells via ADCC. Regulates NK cell survival and proliferation, in particular by preventing NK cell progenitor apoptosis. Fc-binding subunit that associates with CD247 and/or FCER1G adapters to form functional signaling complexes. Following the engagement of antigen-IgG complexes, triggers phosphorylation of immunoreceptor tyrosine-based activation motif (ITAM)-containing adapters with subsequent activation of phosphatidylinositol 3-kinase signaling and sustained elevation of intracellular calcium that ultimately drive NK cell activation. The ITAM-dependent signaling coupled to receptor phosphorylation by PKC mediates robust intracellular calcium flux that leads to production of pro-inflammatory cytokines, whereas in the absence of receptor phosphorylation it mainly activates phosphatidylinositol 3-kinase signaling leading to cell degranulation. Costimulates NK cells and trigger lysis of target cells independently of IgG binding. Mediates the antitumor activities of therapeutic antibodies. Upon ligation on monocytes triggers TNFA-dependent ADCC of IgG-coated tumor cells. Mediates enhanced ADCC in response to afucosylated IgGs. Its function is as follows. (Microbial infection) Involved in Dengue virus pathogenesis via antibody-dependent enhancement (ADE) mechanism. Secondary infection with Dengue virus triggers elevated levels of afucosylated non-neutralizing IgG1s with reactivity to viral envelope/E protein. Viral antigen-IgG1 complexes bind with high affinity to FCGR3A, facilitating virus entry in myeloid cells and subsequent viral replication. In Homo sapiens (Human), this protein is Low affinity immunoglobulin gamma Fc region receptor III-A.